The chain runs to 135 residues: MAQTENQKSKRIPLGKDVSTQRRLSKARRHFRLRKKIAGTTERPRLVVHRSSRHLHAQLVDDTVGKTIAAASSIEPDVRAVEGDKTAKGKKVGELIAARAKAAGVEAVVFDRGGHDYHGRIAALADAAREGGLKF.

The tract at residues 1 to 25 is disordered; it reads MAQTENQKSKRIPLGKDVSTQRRLS.

It belongs to the universal ribosomal protein uL18 family. In terms of assembly, part of the 50S ribosomal subunit; part of the 5S rRNA/L5/L18/L25 subcomplex. Contacts the 5S and 23S rRNAs.

In terms of biological role, this is one of the proteins that bind and probably mediate the attachment of the 5S RNA into the large ribosomal subunit, where it forms part of the central protuberance. In Nocardia farcinica (strain IFM 10152), this protein is Large ribosomal subunit protein uL18.